Reading from the N-terminus, the 881-residue chain is Valine--tRNA ligase (881 aa).

The short motif at 49–59 is the 'HIGH' region element; sequence PNVTGKLHLGH. The 'KMSKS' region motif lies at 526–530; the sequence is KMSKS. Residue Lys-529 participates in ATP binding. A coiled-coil region spans residues 810 to 881; that stretch reads LADLINLDEE…VRQRLADLEK (72 aa).

This sequence belongs to the class-I aminoacyl-tRNA synthetase family. ValS type 1 subfamily. Monomer.

It localises to the cytoplasm. The catalysed reaction is tRNA(Val) + L-valine + ATP = L-valyl-tRNA(Val) + AMP + diphosphate. Its function is as follows. Catalyzes the attachment of valine to tRNA(Val). As ValRS can inadvertently accommodate and process structurally similar amino acids such as threonine, to avoid such errors, it has a 'posttransfer' editing activity that hydrolyzes mischarged Thr-tRNA(Val) in a tRNA-dependent manner. This chain is Valine--tRNA ligase, found in Bacillus thuringiensis subsp. konkukian (strain 97-27).